A 217-amino-acid polypeptide reads, in one-letter code: Thiamine-phosphate synthase (217 aa).

Residues 38-42 (QYRDK) and Asn70 each bind 4-amino-2-methyl-5-(diphosphooxymethyl)pyrimidine. Mg(2+)-binding residues include Asp71 and Asp90. Ser109 is a 4-amino-2-methyl-5-(diphosphooxymethyl)pyrimidine binding site. 136–138 (SIT) contacts 2-[(2R,5Z)-2-carboxy-4-methylthiazol-5(2H)-ylidene]ethyl phosphate. A 4-amino-2-methyl-5-(diphosphooxymethyl)pyrimidine-binding site is contributed by Lys139. Gly166 provides a ligand contact to 2-[(2R,5Z)-2-carboxy-4-methylthiazol-5(2H)-ylidene]ethyl phosphate.

This sequence belongs to the thiamine-phosphate synthase family. Requires Mg(2+) as cofactor.

It catalyses the reaction 2-[(2R,5Z)-2-carboxy-4-methylthiazol-5(2H)-ylidene]ethyl phosphate + 4-amino-2-methyl-5-(diphosphooxymethyl)pyrimidine + 2 H(+) = thiamine phosphate + CO2 + diphosphate. The catalysed reaction is 2-(2-carboxy-4-methylthiazol-5-yl)ethyl phosphate + 4-amino-2-methyl-5-(diphosphooxymethyl)pyrimidine + 2 H(+) = thiamine phosphate + CO2 + diphosphate. The enzyme catalyses 4-methyl-5-(2-phosphooxyethyl)-thiazole + 4-amino-2-methyl-5-(diphosphooxymethyl)pyrimidine + H(+) = thiamine phosphate + diphosphate. It functions in the pathway cofactor biosynthesis; thiamine diphosphate biosynthesis; thiamine phosphate from 4-amino-2-methyl-5-diphosphomethylpyrimidine and 4-methyl-5-(2-phosphoethyl)-thiazole: step 1/1. In terms of biological role, condenses 4-methyl-5-(beta-hydroxyethyl)thiazole monophosphate (THZ-P) and 2-methyl-4-amino-5-hydroxymethyl pyrimidine pyrophosphate (HMP-PP) to form thiamine monophosphate (TMP). The protein is Thiamine-phosphate synthase of Nitrosococcus oceani (strain ATCC 19707 / BCRC 17464 / JCM 30415 / NCIMB 11848 / C-107).